Here is a 248-residue protein sequence, read N- to C-terminus: Type III pantothenate kinase (248 aa).

Glu-6–Lys-13 contacts ATP. Substrate-binding positions include Tyr-94 and Gly-101–Arg-104. Asp-103 (proton acceptor) is an active-site residue. Asp-123 lines the K(+) pocket. ATP is bound at residue Thr-126. Residue Thr-179 participates in substrate binding.

The protein belongs to the type III pantothenate kinase family. As to quaternary structure, homodimer. Requires NH4(+) as cofactor. K(+) serves as cofactor.

It localises to the cytoplasm. It carries out the reaction (R)-pantothenate + ATP = (R)-4'-phosphopantothenate + ADP + H(+). It participates in cofactor biosynthesis; coenzyme A biosynthesis; CoA from (R)-pantothenate: step 1/5. In terms of biological role, catalyzes the phosphorylation of pantothenate (Pan), the first step in CoA biosynthesis. This chain is Type III pantothenate kinase, found in Hydrogenovibrio crunogenus (strain DSM 25203 / XCL-2) (Thiomicrospira crunogena).